The primary structure comprises 196 residues: Phosphoheptose isomerase (196 aa).

Positions Leu35–Gln194 constitute an SIS domain. Asn50–Gly52 serves as a coordination point for substrate. Zn(2+) contacts are provided by His59 and Glu63. Residues Glu63, Asn92–Asp93, Ser118–Ser120, Ser123, and Gln170 each bind substrate. Zn(2+) is bound by residues Gln170 and His178.

This sequence belongs to the SIS family. GmhA subfamily. In terms of assembly, homotetramer. It depends on Zn(2+) as a cofactor.

Its subcellular location is the cytoplasm. It carries out the reaction 2 D-sedoheptulose 7-phosphate = D-glycero-alpha-D-manno-heptose 7-phosphate + D-glycero-beta-D-manno-heptose 7-phosphate. The protein operates within carbohydrate biosynthesis; D-glycero-D-manno-heptose 7-phosphate biosynthesis; D-glycero-alpha-D-manno-heptose 7-phosphate and D-glycero-beta-D-manno-heptose 7-phosphate from sedoheptulose 7-phosphate: step 1/1. Functionally, catalyzes the isomerization of sedoheptulose 7-phosphate in D-glycero-D-manno-heptose 7-phosphate. In Syntrophotalea carbinolica (strain DSM 2380 / NBRC 103641 / GraBd1) (Pelobacter carbinolicus), this protein is Phosphoheptose isomerase.